We begin with the raw amino-acid sequence, 393 residues long: Zinc finger CCHC domain-containing protein 18 (393 aa).

2 disordered regions span residues 281–300 (VEPE…RGTA) and 313–341 (DDFD…RTRK). 2 stretches are compositionally biased toward polar residues: residues 291–300 (PGASSLRGTA) and 320–331 (PSTSSGSGQRNN). A CCHC-type zinc finger spans residues 346–363 (IRCPHCGEEGHAKETCDN).

The protein belongs to the ZCCHC12 family.

The sequence is that of Zinc finger CCHC domain-containing protein 18 from Mus musculus (Mouse).